Here is a 541-residue protein sequence, read N- to C-terminus: L-ornithine N(5)-monooxygenase (541 aa).

FAD-binding positions include 50–58 (EKQPEFQWH) and glutamine 69. A substrate-binding site is contributed by lysine 74. 223–226 (SGQS) lines the NADP(+) pocket. Residues 269 to 272 (NEIF) and asparagine 300 each bind substrate. An NADP(+)-binding site is contributed by 300 to 302 (NYS). Residues 430 to 474 (TEIPKGPDGSLFDASEEEATWRPASPITPASPSPPSTPTSSALSQ) are disordered. Residue 520 to 522 (SLL) coordinates FAD. A substrate-binding site is contributed by serine 523.

It belongs to the lysine N(6)-hydroxylase/L-ornithine N(5)-oxygenase family. As to quaternary structure, homotetramer. FAD serves as cofactor.

The catalysed reaction is L-ornithine + NADPH + O2 = N(5)-hydroxy-L-ornithine + NADP(+) + H2O. It carries out the reaction L-ornithine + NADH + O2 = N(5)-hydroxy-L-ornithine + NAD(+) + H2O. It participates in siderophore biosynthesis. Functionally, L-ornithine N(5)-monooxygenase; part of the siderophore basidioferrin biosynthetic pathway. The biosynthesis of basidioferrin depends on the hydroxylation of ornithine to N(5)-hydroxyornithine, catalyzed by the monooxygenase SMO1. The second step, the acylation of N(5)-hydroxy-L-ornithine is catalyzed by a not yet identified N-acyltransferase. Finally, assembly of basidioferrin is catalyzed by the nonribosomal peptide synthase (NRPS) NPS2 via amide bond formation between three L-AHO molecules to release the linear L-AHO trimer. This is L-ornithine N(5)-monooxygenase (SMO1) from Ceriporiopsis subvermispora (strain B) (White-rot fungus).